The sequence spans 365 residues: Putative fatty acid elongase 2 (365 aa).

At 1–68 (MPDSPTLHHN…SFEFIVNKTR (68 aa)) the chain is on the lumenal side. N-linked (GlcNAc...) asparagine glycans are attached at residues asparagine 17 and asparagine 65. Residues 69 to 89 (FSSAPVVATIIISYYLLILVG) traverse the membrane as a helical segment. Residues 90–111 (GRIMRNRQPIRLQKIFQYYNLT) are Cytoplasmic-facing. A helical transmembrane segment spans residues 112 to 132 (FSIASAILALLIFEQVAPAIY). Topologically, residues 133-149 (KHGFFFSICNEKAWTQP) are lumenal. Residues 150 to 170 (LVFLYYCAYISKFLELTDTFF) form a helical membrane-spanning segment. The Cytoplasmic segment spans residues 171 to 179 (LVLRKKPLQ). A helical transmembrane segment spans residues 180-198 (FLHCYHHGATAVLVYTQIV). The Lumenal segment spans residues 199-204 (GRTSIS). Residues 205–225 (WLIIEINLLVHVTMYYYYYLV) form a helical membrane-spanning segment. At 226-241 (AKGIRVPWKKWVTRFQ) the chain is on the cytoplasmic side. A helical membrane pass occupies residues 242–262 (IVQFFADLGFIYFAVYTEVAY). At 263-278 (RLKFYKACMGHCSGHP) the chain is on the lumenal side. A helical transmembrane segment spans residues 279 to 299 (LAAFCGLATISSYLVLFIVFY). The Cytoplasmic segment spans residues 300-365 (HNTYKKNAAL…PISSGLNNEK (66 aa)).

This sequence belongs to the ELO family.

The protein resides in the endoplasmic reticulum membrane. It carries out the reaction a very-long-chain acyl-CoA + malonyl-CoA + H(+) = a very-long-chain 3-oxoacyl-CoA + CO2 + CoA. Functionally, may be involved in the synthesis of very long chain fatty acids. The protein is Putative fatty acid elongase 2 of Schizosaccharomyces pombe (strain 972 / ATCC 24843) (Fission yeast).